Here is a 324-residue protein sequence, read N- to C-terminus: Beta-ketoacyl-[acyl-carrier-protein] synthase III (324 aa).

Active-site residues include Cys114 and His251. The interval Gln252–Arg256 is ACP-binding. Asn281 is an active-site residue.

It belongs to the thiolase-like superfamily. FabH family. In terms of assembly, homodimer.

It is found in the cytoplasm. The enzyme catalyses malonyl-[ACP] + acetyl-CoA + H(+) = 3-oxobutanoyl-[ACP] + CO2 + CoA. The protein operates within lipid metabolism; fatty acid biosynthesis. Catalyzes the condensation reaction of fatty acid synthesis by the addition to an acyl acceptor of two carbons from malonyl-ACP. Catalyzes the first condensation reaction which initiates fatty acid synthesis and may therefore play a role in governing the total rate of fatty acid production. Possesses both acetoacetyl-ACP synthase and acetyl transacylase activities. Its substrate specificity determines the biosynthesis of branched-chain and/or straight-chain of fatty acids. The chain is Beta-ketoacyl-[acyl-carrier-protein] synthase III from Rhodobacter capsulatus (Rhodopseudomonas capsulata).